The sequence spans 481 residues: ATP synthase subunit beta (481 aa).

167–174 (GGAGVGKT) provides a ligand contact to ATP.

It belongs to the ATPase alpha/beta chains family. As to quaternary structure, F-type ATPases have 2 components, CF(1) - the catalytic core - and CF(0) - the membrane proton channel. CF(1) has five subunits: alpha(3), beta(3), gamma(1), delta(1), epsilon(1). CF(0) has three main subunits: a(1), b(2) and c(9-12). The alpha and beta chains form an alternating ring which encloses part of the gamma chain. CF(1) is attached to CF(0) by a central stalk formed by the gamma and epsilon chains, while a peripheral stalk is formed by the delta and b chains.

It is found in the cell membrane. The catalysed reaction is ATP + H2O + 4 H(+)(in) = ADP + phosphate + 5 H(+)(out). In terms of biological role, produces ATP from ADP in the presence of a proton gradient across the membrane. The catalytic sites are hosted primarily by the beta subunits. This chain is ATP synthase subunit beta, found in Corynebacterium efficiens (strain DSM 44549 / YS-314 / AJ 12310 / JCM 11189 / NBRC 100395).